Here is a 403-residue protein sequence, read N- to C-terminus: uncharacterized protein (403 aa).

Residues 1-26 (MYKFKTNLFLVIYFIAIFSIESSISS) form the signal peptide. The Extracellular portion of the chain corresponds to 27–381 (FNTEINSNSN…DSDNSSFGIS (355 aa)). Asparagine 58, asparagine 90, asparagine 93, asparagine 124, asparagine 137, asparagine 371, and asparagine 375 each carry an N-linked (GlcNAc...) asparagine glycan. Residues 382–402 (IQKYLNSFLNSFIIILIINII) traverse the membrane as a helical segment. A topological domain (cytoplasmic) is located at residue isoleucine 403.

The protein resides in the membrane. This is an uncharacterized protein from Dictyostelium discoideum (Social amoeba).